Here is a 358-residue protein sequence, read N- to C-terminus: Metacaspase-3 (358 aa).

The interval 1-84 is important for catalytic activity; that stretch reads MGFDFGCLLK…APTHVSGTFR (84 aa). Catalysis depends on residues His-168 and Cys-223.

It belongs to the peptidase C14B family. Post-translationally, in epimastigotes, the unprocessed enzyme appears to be the main form. Auto-processing is dispensable for catalytic activity towards small oligopeptide substrates.

The protein resides in the cytoplasm. It localises to the nucleus. With respect to regulation, activated by Ca(2+). Functionally, cysteine protease that cleaves specifically after arginine or lysine residues. In epimastigotes, may play a role in cell cycle G1/S transition. The chain is Metacaspase-3 from Trypanosoma cruzi (strain CL Brener).